The chain runs to 84 residues: Large ribosomal subunit protein bL27 (84 aa).

The segment at 1 to 21 (MAHKKGGGSTKNGRDSNPKYL) is disordered.

This sequence belongs to the bacterial ribosomal protein bL27 family.

In Chlorobium phaeovibrioides (strain DSM 265 / 1930) (Prosthecochloris vibrioformis (strain DSM 265)), this protein is Large ribosomal subunit protein bL27.